Here is a 139-residue protein sequence, read N- to C-terminus: Aspartate 1-decarboxylase (139 aa).

The active-site Schiff-base intermediate with substrate; via pyruvic acid is serine 25. Serine 25 carries the pyruvic acid (Ser) modification. Threonine 57 is a substrate binding site. Tyrosine 58 acts as the Proton donor in catalysis. Residue 73–75 (GAA) coordinates substrate. Residues 117–139 (LGADPAEPVPGSDQARSPQAVTA) are disordered. Positions 130–139 (QARSPQAVTA) are enriched in polar residues.

It belongs to the PanD family. As to quaternary structure, heterooctamer of four alpha and four beta subunits. Pyruvate serves as cofactor. Is synthesized initially as an inactive proenzyme, which is activated by self-cleavage at a specific serine bond to produce a beta-subunit with a hydroxyl group at its C-terminus and an alpha-subunit with a pyruvoyl group at its N-terminus.

It is found in the cytoplasm. It carries out the reaction L-aspartate + H(+) = beta-alanine + CO2. It participates in cofactor biosynthesis; (R)-pantothenate biosynthesis; beta-alanine from L-aspartate: step 1/1. Functionally, catalyzes the pyruvoyl-dependent decarboxylation of aspartate to produce beta-alanine. This chain is Aspartate 1-decarboxylase, found in Streptomyces avermitilis (strain ATCC 31267 / DSM 46492 / JCM 5070 / NBRC 14893 / NCIMB 12804 / NRRL 8165 / MA-4680).